We begin with the raw amino-acid sequence, 254 residues long: Mamu class II histocompatibility antigen, DR alpha chain (254 aa).

The N-terminal stretch at 1–25 (MAESGVPVLGFFIIAVLMSAQESWA) is a signal peptide. Residues 26-109 (IKEEHVIIQA…KRSNNTPITN (84 aa)) are alpha-1. Over 26–216 (IKEEHVIIQA…APSPLPETTE (191 aa)) the chain is Extracellular. Asparagine 103 carries an N-linked (GlcNAc...) asparagine glycan. The interval 110–203 (VPPEVTVLTN…CLDAPLLKHW (94 aa)) is alpha-2. Residues 112-204 (PEVTVLTNSP…LDAPLLKHWE (93 aa)) enclose the Ig-like C1-type domain. Cysteines 132 and 188 form a disulfide. Residues 204-216 (EFDAPSPLPETTE) are connecting peptide. A helical membrane pass occupies residues 217 to 239 (NVVCALGLIVGLVGIIVGTVFII). The Cytoplasmic portion of the chain corresponds to 240 to 254 (KGVRKSNAAERRGPL). Lysine 244 participates in a covalent cross-link: Glycyl lysine isopeptide (Lys-Gly) (interchain with G-Cter in ubiquitin).

This sequence belongs to the MHC class II family. Heterodimer of an alpha chain and a beta chain.

The protein localises to the membrane. The polypeptide is Mamu class II histocompatibility antigen, DR alpha chain (Mamu-DRA) (Macaca mulatta (Rhesus macaque)).